Here is a 447-residue protein sequence, read N- to C-terminus: uncharacterized protein (447 aa).

The segment at 39 to 76 is disordered; that stretch reads PQAAPYTRNNGMGECRRGHRQGHRAEVHDNRPADKVGQ. Over residues 61–72 the composition is skewed to basic and acidic residues; the sequence is HRAEVHDNRPAD.

The protein belongs to the 3-oxoacid CoA-transferase subunit A family.

This is an uncharacterized protein from Archaeoglobus fulgidus (strain ATCC 49558 / DSM 4304 / JCM 9628 / NBRC 100126 / VC-16).